Here is a 221-residue protein sequence, read N- to C-terminus: Urease accessory protein UreE (221 aa).

Residues 171-180 (HHGHDHDHGH) are compositionally biased toward basic and acidic residues. Residues 171–221 (HHGHDHDHGHSHSHSHSHSHSHSHSHDHDHDHDHEHDVKGHVHGPGCGHKH) are disordered. Residues 181 to 193 (SHSHSHSHSHSHS) show a composition bias toward basic residues. Residues 194–210 (HSHDHDHDHDHEHDVKG) are compositionally biased toward basic and acidic residues.

It belongs to the UreE family.

The protein localises to the cytoplasm. Functionally, involved in urease metallocenter assembly. Binds nickel. Probably functions as a nickel donor during metallocenter assembly. The polypeptide is Urease accessory protein UreE (Cupriavidus pinatubonensis (strain JMP 134 / LMG 1197) (Cupriavidus necator (strain JMP 134))).